A 468-amino-acid chain; its full sequence is UDP-N-acetylmuramate--L-alanine ligase (468 aa).

Position 114 to 120 (114 to 120 (GTHGKTT)) interacts with ATP.

The protein belongs to the MurCDEF family.

The protein resides in the cytoplasm. The enzyme catalyses UDP-N-acetyl-alpha-D-muramate + L-alanine + ATP = UDP-N-acetyl-alpha-D-muramoyl-L-alanine + ADP + phosphate + H(+). The protein operates within cell wall biogenesis; peptidoglycan biosynthesis. Functionally, cell wall formation. The sequence is that of UDP-N-acetylmuramate--L-alanine ligase from Methylocella silvestris (strain DSM 15510 / CIP 108128 / LMG 27833 / NCIMB 13906 / BL2).